The following is a 217-amino-acid chain: Acyl-homoserine-lactone synthase (217 aa).

This sequence belongs to the autoinducer synthase family.

The catalysed reaction is a fatty acyl-[ACP] + S-adenosyl-L-methionine = an N-acyl-L-homoserine lactone + S-methyl-5'-thioadenosine + holo-[ACP] + H(+). Required for the synthesis of OHHL (N-(3-oxohexanoyl)-L-homoserine lactone), an autoinducer molecule which binds to ExpR and thus acts in virulence (soft rot disease) through the activation of genes for plant tissue macerating enzymes. This chain is Acyl-homoserine-lactone synthase (expI), found in Pectobacterium parmentieri.